The chain runs to 302 residues: Ribosomal RNA small subunit methyltransferase H (302 aa).

Residues 43 to 45 (GGH), Asp62, Phe89, Asp105, and His112 contribute to the S-adenosyl-L-methionine site. A disordered region spans residues 276–302 (EIANNPRSRSAKLRIAEKQAETGDEDN).

This sequence belongs to the methyltransferase superfamily. RsmH family.

The protein localises to the cytoplasm. The enzyme catalyses cytidine(1402) in 16S rRNA + S-adenosyl-L-methionine = N(4)-methylcytidine(1402) in 16S rRNA + S-adenosyl-L-homocysteine + H(+). Specifically methylates the N4 position of cytidine in position 1402 (C1402) of 16S rRNA. The chain is Ribosomal RNA small subunit methyltransferase H from Nostoc sp. (strain PCC 7120 / SAG 25.82 / UTEX 2576).